A 1369-amino-acid chain; its full sequence is Probable tegument protein antigen 3 (1369 aa).

Positions 1347–1369 (DRRGAVPHDNPQYIPMDAMDPSQ) are disordered.

Its subcellular location is the virion tegument. In Connochaetes taurinus (Blue wildebeest), this protein is Probable tegument protein antigen 3 (3).